The sequence spans 465 residues: Zinc finger CCCH domain-containing protein 58 (465 aa).

The tract at residues 1–26 (MERYGGAGEDESRSDPSHEWSAQGTE) is disordered. 3 consecutive C3H1-type zinc fingers follow at residues 51–79 (RPDE…HPRN), 97–125 (RMGQ…HPRQ), and 145–173 (RPGE…HPVP). 2 disordered regions span residues 173-200 (PPGV…LQSQ) and 274-302 (LSPS…QRPE). A compositionally biased stretch (low complexity) spans 177–191 (QAPSQQQQQQLSAGP). Residues 283-298 (SGPSSTGVSNKEQTFP) show a composition bias toward polar residues. C3H1-type zinc fingers lie at residues 300 to 328 (RPEQ…HPME) and 345 to 373 (RPGA…HSLG). Low complexity predominate over residues 397 to 431 (SLGTLAPSSSSDQCTELISSSSIEPITTTTGGSET). The disordered stretch occupies residues 397-465 (SLGTLAPSSS…SASNEAKTSS (69 aa)). Positions 444-453 (SHPEPAETNK) are enriched in basic and acidic residues. Positions 454 to 465 (GDSASNEAKTSS) are enriched in polar residues.

The protein resides in the nucleus. This is Zinc finger CCCH domain-containing protein 58 from Arabidopsis thaliana (Mouse-ear cress).